The following is a 255-amino-acid chain: Large ribosomal subunit protein uL4 (255 aa).

The protein belongs to the universal ribosomal protein uL4 family. As to quaternary structure, part of the 50S ribosomal subunit.

One of the primary rRNA binding proteins, this protein initially binds near the 5'-end of the 23S rRNA. It is important during the early stages of 50S assembly. It makes multiple contacts with different domains of the 23S rRNA in the assembled 50S subunit and ribosome. Functionally, forms part of the polypeptide exit tunnel. The protein is Large ribosomal subunit protein uL4 of Thermococcus onnurineus (strain NA1).